Reading from the N-terminus, the 512-residue chain is MEEFPGYFELDRSRQHDFLYPLIFRESIYALAHDHGLNRNRSTLFENEVDYDKKYSLIIVKRLITRMYQRNHLIISANGSVQNPFWGHNKNLYSKILSEGFAVIVEIPFSLRVLSSFERKEKDIAKSPTLRSIHSIFPFLEDQFSHLDYLSHVLIPYPIHLEIAVQTLRYWVKDASSLHLLRIFLHEYWNSFSTPKKHITLFLKGNSRFFLFLYNSYVCEYESIFLFIRNQSSHFQSTSSGVFFERILFYVKIDHLVEVFVGTDFLDIRSFFKDPNMHYVRYQGKSILASKDTPLLMNKWKYYLVNLWQYHFSVWSQPGRININQLGKYSLDFLGYFSNVQLKSSVVRNQTLENSFLINNAMKKLETTVPILPLIGSLSRAKFCNALGHPISKPTRTDSSDSDIIDRFVRICRNLSHYHSGSSKKKSLYRIKYILRLSCVKTLARKHKSSVRAFLKRLGSELGDEFLTEEGVVLAVIFPKASGRLYRGRIWYLDIPCINDWVGDAEGSIFTK.

Belongs to the intron maturase 2 family. MatK subfamily.

Its subcellular location is the plastid. The protein localises to the chloroplast. In terms of biological role, usually encoded in the trnK tRNA gene intron. Probably assists in splicing its own and other chloroplast group II introns. The protein is Maturase K of Oenothera argillicola (Appalachian evening primrose).